Consider the following 348-residue polypeptide: Phosphate acyltransferase (348 aa).

The protein belongs to the PlsX family. In terms of assembly, homodimer. Probably interacts with PlsY.

Its subcellular location is the cytoplasm. The catalysed reaction is a fatty acyl-[ACP] + phosphate = an acyl phosphate + holo-[ACP]. It participates in lipid metabolism; phospholipid metabolism. In terms of biological role, catalyzes the reversible formation of acyl-phosphate (acyl-PO(4)) from acyl-[acyl-carrier-protein] (acyl-ACP). This enzyme utilizes acyl-ACP as fatty acyl donor, but not acyl-CoA. The chain is Phosphate acyltransferase from Leuconostoc citreum (strain KM20).